The chain runs to 359 residues: Short chain dehydrogenase resG (359 aa).

Positions 87, 110, 137, 237, and 241 each coordinate NADP(+). The Proton donor role is filled by Tyr237. The active-site Lowers pKa of active site Tyr is the Lys241.

Belongs to the short-chain dehydrogenases/reductases (SDR) family.

It functions in the pathway antifungal biosynthesis. Its function is as follows. Short chain dehydrogenase; part of the gene cluster that mediates the biosynthesis of the tetrahydropyranyl antifungal agent restricticin that acts as an inhibitor of CYP51 and blocks the ergosterol biosynthesis. The highly reducing polyketide synthase resH, the short chain dehydrogenase resG, the cyclase resF, the FAD-dependent monooxygenase resA and the enoylreductase resD are required to generate the first stable intermediate desmethylrestrictinol. ResH with resD biosynthesize the first polyketide chain intermediate that is reduced by resG, followed by epoxidation by resA before 6-endo cyclization via epoxide opening by resF leads to desmethylrestrictinol. The methyltransferase resE then catalyzes the C4 O-methylation of desmethylrestrictinol to produce restrictinol, and the nonribosomal peptide synthetase resC catalyzes the C3 esterification of restrictinol with glycine that leads to restricticin. This is Short chain dehydrogenase resG from Aspergillus sclerotiorum.